The primary structure comprises 237 residues: Uridylate kinase (237 aa).

12 to 15 (KISG) is a binding site for ATP. Position 54 (glycine 54) interacts with UMP. ATP is bound by residues glycine 55 and arginine 59. UMP is bound by residues aspartate 72 and 133 to 140 (TGNPFFST). The ATP site is built by tyrosine 166 and aspartate 169.

Belongs to the UMP kinase family. As to quaternary structure, homohexamer.

The protein resides in the cytoplasm. The catalysed reaction is UMP + ATP = UDP + ADP. Its pathway is pyrimidine metabolism; CTP biosynthesis via de novo pathway; UDP from UMP (UMPK route): step 1/1. With respect to regulation, inhibited by UTP. In terms of biological role, catalyzes the reversible phosphorylation of UMP to UDP. This Caldanaerobacter subterraneus subsp. tengcongensis (strain DSM 15242 / JCM 11007 / NBRC 100824 / MB4) (Thermoanaerobacter tengcongensis) protein is Uridylate kinase.